Reading from the N-terminus, the 206-residue chain is Ribosomal RNA small subunit methyltransferase G (206 aa).

S-adenosyl-L-methionine is bound by residues Gly71, Phe76, 122-123, and Arg135; that span reads AE.

This sequence belongs to the methyltransferase superfamily. RNA methyltransferase RsmG family.

It localises to the cytoplasm. Specifically methylates the N7 position of a guanine in 16S rRNA. This chain is Ribosomal RNA small subunit methyltransferase G, found in Bacteroides fragilis (strain ATCC 25285 / DSM 2151 / CCUG 4856 / JCM 11019 / LMG 10263 / NCTC 9343 / Onslow / VPI 2553 / EN-2).